The sequence spans 110 residues: U1-lycotoxin-Ls1dd (110 aa).

Positions M1–A20 are cleaved as a signal peptide. The propeptide occupies E21 to R44. Intrachain disulfides connect C47-C62, C54-C71, C61-C89, and C73-C87.

The protein belongs to the neurotoxin 19 (CSTX) family. 03 subfamily. Expressed by the venom gland.

It is found in the secreted. The protein is U1-lycotoxin-Ls1dd of Lycosa singoriensis (Wolf spider).